Consider the following 89-residue polypeptide: FXYD domain-containing ion transport regulator 4 (89 aa).

Positions 1-20 (MERVTLALLLLAGLTALEAN) are cleaved as a signal peptide. The Extracellular portion of the chain corresponds to 21-38 (DPFANKDDPFYYDWKNLQ). Residues 39 to 59 (LSGLICGGLLAIAGIAAVLSG) traverse the membrane as a helical segment. At 60 to 89 (KCKCKSSQKQHSPVPEKAIPLITPGSATTC) the chain is on the cytoplasmic side.

This sequence belongs to the FXYD family. Regulatory subunit of the sodium/potassium-transporting ATPase which is composed of a catalytic alpha subunit, a non-catalytic beta subunit and a regulatory subunit. The regulatory subunit, a member of the FXYD protein family, modulates the enzymatic activity in a tissue- and isoform-specific way by changing affinities of the Na+/K+-ATPase toward Na(+), K(+) or ATP.

The protein localises to the cell membrane. It is found in the basolateral cell membrane. Associates with and regulates the activity of the sodium/potassium-transporting ATPase (NKA) which catalyzes the hydrolysis of ATP coupled with the exchange of Na(+) and K(+) ions across the plasma membrane. Increases the apparent affinity of the transporter for Na(+) and increases NKA activity. The protein is FXYD domain-containing ion transport regulator 4 (FXYD4) of Homo sapiens (Human).